The following is a 504-amino-acid chain: Ribosomal protein uS12 methylthiotransferase RimO (504 aa).

The MTTase N-terminal domain occupies Lys19–Arg135. The [4Fe-4S] cluster site is built by Cys28, Cys64, Cys98, Cys214, Cys218, and Cys221. The region spanning Ala200 to Lys430 is the Radical SAM core domain. The region spanning Lys433–Leu504 is the TRAM domain.

This sequence belongs to the methylthiotransferase family. RimO subfamily. [4Fe-4S] cluster serves as cofactor.

It localises to the cytoplasm. It catalyses the reaction L-aspartate(89)-[ribosomal protein uS12]-hydrogen + (sulfur carrier)-SH + AH2 + 2 S-adenosyl-L-methionine = 3-methylsulfanyl-L-aspartate(89)-[ribosomal protein uS12]-hydrogen + (sulfur carrier)-H + 5'-deoxyadenosine + L-methionine + A + S-adenosyl-L-homocysteine + 2 H(+). Functionally, catalyzes the methylthiolation of an aspartic acid residue of ribosomal protein uS12. This chain is Ribosomal protein uS12 methylthiotransferase RimO, found in Koribacter versatilis (strain Ellin345).